The primary structure comprises 397 residues: Acetate kinase (397 aa).

Residue N7 coordinates Mg(2+). K14 provides a ligand contact to ATP. R90 lines the substrate pocket. Catalysis depends on D147, which acts as the Proton donor/acceptor. Residues 207–211 (HLGNG), 282–284 (DFR), and 330–334 (GIGEN) contribute to the ATP site. E384 is a Mg(2+) binding site.

This sequence belongs to the acetokinase family. As to quaternary structure, homodimer. Requires Mg(2+) as cofactor. Mn(2+) serves as cofactor.

It localises to the cytoplasm. It catalyses the reaction acetate + ATP = acetyl phosphate + ADP. It participates in metabolic intermediate biosynthesis; acetyl-CoA biosynthesis; acetyl-CoA from acetate: step 1/2. Functionally, catalyzes the formation of acetyl phosphate from acetate and ATP. Can also catalyze the reverse reaction. The protein is Acetate kinase of Agathobacter rectalis (strain ATCC 33656 / DSM 3377 / JCM 17463 / KCTC 5835 / VPI 0990) (Eubacterium rectale).